Reading from the N-terminus, the 389-residue chain is Oxysterol-binding protein 1 (389 aa).

Coiled coils occupy residues methionine 1–alanine 31 and lysine 340–lysine 371. Residues methionine 1 to aspartate 43 form a disordered region.

Belongs to the OSBP family. In terms of assembly, interacts with dstC.

It is found in the cytoplasm. Functionally, may play a role in the regulation of the slug-fruiting body switch. This Dictyostelium discoideum (Social amoeba) protein is Oxysterol-binding protein 1 (osbA).